The chain runs to 513 residues: MVAFFLPGPRRDPRIRRTARQGMGFLVQHLLIMGSSRILKRNQEMAMNKCSVLLNRAREFEPSRANGGYILSTSSYPQIRQYAASPDEHLRSLPSLLPPPPGQELPLAYLRAQRQSSGNYRGIQAQRRPLIDQTGALQSSFPESICLKEELQSLSMPRNSPNAGRNLVGHPHSSSKSSSKPCHFHFFRGYCKKGVNCQFFHGSVPELHNPRQVHPFASLSKLDMEIRELLIGIPPPVAVDRLPSMYFEKYGKPLRPDGWLTESQQHGRTGCSLTSLLMGLNTIRVVEREHGQYHVVLVEDARKKYMDCLGLAHSCNLMDTGTGSNQIYMTFPVHSKFTDDDVENYFKQFGPVSGVRIPYQEKRMFGFVSFLYTETVRLILSKGTAHFICGLRVLVKRYMEKSELRMTWLKSVSGSQVDSCLKVTIGHTIAKAPSKKKKEVKEQCSKDQGPIKIYRKNKQFDYREHRTSGFGVTNEHYIGNNMKKKSHRSDDLDEASAYEDSDEIILPDSLGLY.

The interval 155-180 (SMPRNSPNAGRNLVGHPHSSSKSSSK) is disordered. Residues 170 to 180 (HPHSSSKSSSK) show a composition bias toward low complexity. The C3H1-type zinc-finger motif lies at 176-204 (KSSSKPCHFHFFRGYCKKGVNCQFFHGSV). The 82-residue stretch at 218–299 (SLSKLDMEIR…HGQYHVVLVE (82 aa)) folds into the HTH OST-type domain. Residues 325 to 411 (NQIYMTFPVH…SELRMTWLKS (87 aa)) enclose the RRM domain.

This Oryza sativa subsp. japonica (Rice) protein is Putative zinc finger CCCH domain-containing protein 51.